A 317-amino-acid polypeptide reads, in one-letter code: Type II methyltransferase M.MgeORF184P (317 aa).

The protein belongs to the N(4)/N(6)-methyltransferase family.

It carries out the reaction a 2'-deoxyadenosine in DNA + S-adenosyl-L-methionine = an N(6)-methyl-2'-deoxyadenosine in DNA + S-adenosyl-L-homocysteine + H(+). Functionally, probably recognizes the double-stranded sequence 5'-CTAT-3' and methylates A-3 on only one strand; as the bacterial DNA is methylated on this sequence and this is the only type II methylase in the genome, it is probably responsible for all of the methylation on this site in the genome. The protein is Type II methyltransferase M.MgeORF184P of Mycoplasma genitalium (strain ATCC 33530 / DSM 19775 / NCTC 10195 / G37) (Mycoplasmoides genitalium).